Reading from the N-terminus, the 353-residue chain is Glucose import ATP-binding protein GlcV (353 aa).

In terms of domain architecture, ABC transporter spans 4–241; that stretch reads IIVKNVSKVF…PVSIQVASLI (238 aa). ATP is bound by residues 40–46, Gln89, and Glu166; that span reads SGAGKTT.

This sequence belongs to the ABC transporter superfamily. In terms of assembly, the complex is composed of two ATP-binding proteins (GlcV), two transmembrane proteins (GlcT and GlcU) and a solute-binding protein (GlcS). Forms transient head-to-tail homodimers in the presence of ATP-Mg(2+).

The protein resides in the cell membrane. The enzyme catalyses D-glucose(out) + ATP + H2O = D-glucose(in) + ADP + phosphate + H(+). In terms of biological role, part of the ABC transporter complex GlcSTUV involved in glucose uptake. Responsible for energy coupling to the transport system. In vitro, as a free subunit, exhibits a constitutive ATPase activity. In Saccharolobus solfataricus (strain ATCC 35092 / DSM 1617 / JCM 11322 / P2) (Sulfolobus solfataricus), this protein is Glucose import ATP-binding protein GlcV.